The sequence spans 535 residues: RNA-splicing ligase RtcB homolog 1 (535 aa).

Residues 1-16 show a composition bias toward basic residues; that stretch reads MAKSRYSRKNKGKKLQ. The interval 1-29 is disordered; that stretch reads MAKSRYSRKNKGKKLQRVQENTVSTEEKS. Mn(2+) is bound by residues D152, C155, H260, H292, and H383. 259-263 contacts GMP; it reads NHYLE. Residues 383–384, 432–435, S439, 458–461, and K534 contribute to the GMP site; these read HN, GGSM, and HGAG. The active-site GMP-histidine intermediate is H458.

The protein belongs to the RtcB family. In terms of assembly, catalytic component of the tRNA-splicing ligase complex. It depends on Mn(2+) as a cofactor.

The catalysed reaction is a 3'-end 3'-phospho-ribonucleotide-RNA + a 5'-end dephospho-ribonucleoside-RNA + GTP = a ribonucleotidyl-ribonucleotide-RNA + GMP + diphosphate. It catalyses the reaction a 3'-end 2',3'-cyclophospho-ribonucleotide-RNA + a 5'-end dephospho-ribonucleoside-RNA + GTP + H2O = a ribonucleotidyl-ribonucleotide-RNA + GMP + diphosphate + H(+). Its function is as follows. Catalytic subunit of the tRNA-splicing ligase complex that acts by directly joining spliced tRNA halves to mature-sized tRNAs by incorporating the precursor-derived splice junction phosphate into the mature tRNA as a canonical 3',5'-phosphodiester. May act as an RNA ligase with broad substrate specificity, and may function toward other RNAs. The polypeptide is RNA-splicing ligase RtcB homolog 1 (Entamoeba dispar (strain ATCC PRA-260 / SAW760)).